Reading from the N-terminus, the 132-residue chain is Ribosome-binding factor A (132 aa).

This sequence belongs to the RbfA family. As to quaternary structure, monomer. Binds 30S ribosomal subunits, but not 50S ribosomal subunits or 70S ribosomes.

It is found in the cytoplasm. In terms of biological role, one of several proteins that assist in the late maturation steps of the functional core of the 30S ribosomal subunit. Associates with free 30S ribosomal subunits (but not with 30S subunits that are part of 70S ribosomes or polysomes). Required for efficient processing of 16S rRNA. May interact with the 5'-terminal helix region of 16S rRNA. The polypeptide is Ribosome-binding factor A (Pectobacterium carotovorum subsp. carotovorum (strain PC1)).